Here is a 540-residue protein sequence, read N- to C-terminus: Chaperonin GroEL 4 (540 aa).

Residues 29-32, 86-90, Gly413, 477-479, and Asp493 contribute to the ATP site; these read TLGP, DGTTT, and NAA.

It belongs to the chaperonin (HSP60) family. As to quaternary structure, forms a cylinder of 14 subunits composed of two heptameric rings stacked back-to-back. Interacts with the co-chaperonin GroES.

The protein resides in the cytoplasm. It carries out the reaction ATP + H2O + a folded polypeptide = ADP + phosphate + an unfolded polypeptide.. Functionally, together with its co-chaperonin GroES, plays an essential role in assisting protein folding. The GroEL-GroES system forms a nano-cage that allows encapsulation of the non-native substrate proteins and provides a physical environment optimized to promote and accelerate protein folding. This Frankia alni (strain DSM 45986 / CECT 9034 / ACN14a) protein is Chaperonin GroEL 4.